The primary structure comprises 261 residues: Hydroxyethylthiazole kinase (261 aa).

A substrate-binding site is contributed by Met-45. 2 residues coordinate ATP: Arg-121 and Ser-167. A substrate-binding site is contributed by Gly-194.

This sequence belongs to the Thz kinase family. Mg(2+) serves as cofactor.

The catalysed reaction is 5-(2-hydroxyethyl)-4-methylthiazole + ATP = 4-methyl-5-(2-phosphooxyethyl)-thiazole + ADP + H(+). The protein operates within cofactor biosynthesis; thiamine diphosphate biosynthesis; 4-methyl-5-(2-phosphoethyl)-thiazole from 5-(2-hydroxyethyl)-4-methylthiazole: step 1/1. In terms of biological role, catalyzes the phosphorylation of the hydroxyl group of 4-methyl-5-beta-hydroxyethylthiazole (THZ). The chain is Hydroxyethylthiazole kinase from Vibrio atlanticus (strain LGP32) (Vibrio splendidus (strain Mel32)).